The sequence spans 540 residues: Lysosomal cobalamin transport escort protein LMBD1 (540 aa).

Residues 1 to 10 (MATSGAASAE) are Extracellular-facing. Residues 11-31 (LVIGWCIFGLLLLAILAFCWI) form a helical membrane-spanning segment. The Cytoplasmic portion of the chain corresponds to 32 to 50 (YVRKYQSRRESEVVSTITA). The chain crosses the membrane as a helical span at residues 51-71 (IFSLAIALITSALLPVDIFLV). Residues 72–100 (SYMKNQNGTFKDWANANVSRQIEDTVLYG) lie on the Extracellular side of the membrane. Asparagine 78 and asparagine 88 each carry an N-linked (GlcNAc...) asparagine glycan. The chain crosses the membrane as a helical span at residues 101 to 121 (YYTLYSVILFCVFFWIPFVYF). Topologically, residues 122–144 (YYEEKDDDDTSKCTQIKTALKYT) are cytoplasmic. The chain crosses the membrane as a helical span at residues 145-165 (LGFVVICALLLLVGAFVPLNV). Residues 166–188 (PNNKNSTEWEKVKSLFEELGSSH) are Extracellular-facing. A glycan (N-linked (GlcNAc...) asparagine) is linked at asparagine 170. The helical transmembrane segment at 189-209 (GLAALSFSISSLTLIGMLAAI) threads the bilayer. Topologically, residues 210-305 (TYTAYGMSAL…KFCGALRPLK (96 aa)) are cytoplasmic. Positions 232-235 (YERL) match the YERL motif; mediates interaction with adapter protein complex 2 and is essential for its function in clathrin-mediated endocytosis of INSR motif. Threonine 238 carries the post-translational modification Phosphothreonine. Positions 294-297 (WTKF) match the WTKF motif; mediates interaction with adapter protein complex 2 and is essential for its function in clathrin-mediated endocytosis of INSR motif. Residues 306 to 326 (IVWGIFFILVALLFVISLFLS) form a helical membrane-spanning segment. Residues 327–364 (NLDKALHSAGIDSGFIIFGANLSNPLNMLLPLLQTVFP) are Extracellular-facing. An N-linked (GlcNAc...) asparagine glycan is attached at asparagine 347. Residues 365 to 385 (LDYILITIIIMYFIFTSMAGI) form a helical membrane-spanning segment. Over 386-408 (RNIGIWFFWIRLYKIRRGRTRPQ) the chain is Cytoplasmic. A helical membrane pass occupies residues 409–429 (ALLFLCMILLLIVLHTSYMIY). The Extracellular segment spans residues 430-486 (SLAPQYVMYGSQNYLIETNITSDNHKGNSTLSVPKRCDADAPEDQCTVTRTYLFLHK). N-linked (GlcNAc...) asparagine glycans are attached at residues asparagine 448 and asparagine 457. A helical membrane pass occupies residues 487-507 (FWFFSAAYYFGNWAFLGVFLI). Over 508-540 (GLIVSCCKGKKSVIEGVDEDSDISDDEPSVYSA) the chain is Cytoplasmic. 2 positions are modified to phosphoserine: serine 528 and serine 531.

The protein belongs to the LIMR family. LMBRD1 subfamily. As to quaternary structure, (Microbial infection) Interacts with hepatitis delta virus NES (HDAg-L). In terms of assembly, interacts with ABCD4; this interaction induces the translocation of ABCD4 from the endoplasmic reticulum to the lysosome. Interacts with ABCD4 and MMACHC; this interaction ensures the transport of cobalamin from the lysosome to the cytoplasm. Interacts with INSR, adapter protein complex 2 and clathrin heavy chain. In terms of processing, N-glycosylated. As to expression, isoform 3 is expressed in liver.

The protein localises to the endoplasmic reticulum membrane. It localises to the lysosome membrane. Its subcellular location is the cell membrane. The protein resides in the cytoplasmic vesicle. It is found in the clathrin-coated vesicle. Functionally, lysosomal membrane chaperone required to export cobalamin (vitamin B12) from the lysosome to the cytosol, allowing its conversion to cofactors. Targets ABCD4 transporter from the endoplasmic reticulum to the lysosome. Then forms a complex with lysosomal ABCD4 and cytoplasmic MMACHC to transport cobalamin across the lysosomal membrane. Acts as an adapter protein which plays an important role in mediating and regulating the internalization of the insulin receptor (INSR). Involved in clathrin-mediated endocytosis of INSR via its interaction with adapter protein complex 2. Essential for the initiation of gastrulation and early formation of mesoderm structures during embryogenesis. Its function is as follows. (Microbial infection) May play a role in the assembly of hepatitis delta virus (HDV). This is Lysosomal cobalamin transport escort protein LMBD1 from Homo sapiens (Human).